Consider the following 433-residue polypeptide: 3-phosphoshikimate 1-carboxyvinyltransferase (433 aa).

3-phosphoshikimate contacts are provided by Lys22, Ser23, and Arg27. Residue Lys22 participates in phosphoenolpyruvate binding. Positions 95 and 123 each coordinate phosphoenolpyruvate. 3-phosphoshikimate-binding residues include Ser167, Gln169, Asp315, and Lys342. Gln169 contacts phosphoenolpyruvate. Catalysis depends on Asp315, which acts as the Proton acceptor. Arg346 and Arg387 together coordinate phosphoenolpyruvate.

It belongs to the EPSP synthase family. As to quaternary structure, monomer.

The protein localises to the cytoplasm. The catalysed reaction is 3-phosphoshikimate + phosphoenolpyruvate = 5-O-(1-carboxyvinyl)-3-phosphoshikimate + phosphate. It functions in the pathway metabolic intermediate biosynthesis; chorismate biosynthesis; chorismate from D-erythrose 4-phosphate and phosphoenolpyruvate: step 6/7. Functionally, catalyzes the transfer of the enolpyruvyl moiety of phosphoenolpyruvate (PEP) to the 5-hydroxyl of shikimate-3-phosphate (S3P) to produce enolpyruvyl shikimate-3-phosphate and inorganic phosphate. The protein is 3-phosphoshikimate 1-carboxyvinyltransferase of Legionella pneumophila (strain Corby).